The following is a 112-amino-acid chain: Iron-sulfur cluster assembly protein CyaY (112 aa).

It belongs to the frataxin family.

In terms of biological role, involved in iron-sulfur (Fe-S) cluster assembly. May act as a regulator of Fe-S biogenesis. The sequence is that of Iron-sulfur cluster assembly protein CyaY from Janthinobacterium sp. (strain Marseille) (Minibacterium massiliensis).